A 135-amino-acid polypeptide reads, in one-letter code: Fatty acid-binding protein 5 (135 aa).

N-acetylalanine is present on alanine 2. Residue serine 3 is modified to Phosphoserine. The Nuclear localization signal motif lies at 24 to 34; the sequence is KELGVGLALRK. Cysteine 43 and arginine 109 together coordinate N-eicosanoyl ethanolamine. Residues cysteine 120 and cysteine 127 are joined by a disulfide bond. Position 129–131 (129–131) interacts with (9Z,12Z)-octadecadienoate; the sequence is RVY. Residue tyrosine 131 participates in N-eicosanoyl ethanolamine binding. Hexadecanoate is bound at residue tyrosine 131. Tyrosine 131 is modified (phosphotyrosine).

This sequence belongs to the calycin superfamily. Fatty-acid binding protein (FABP) family. Monomer.

It localises to the cytoplasm. Its subcellular location is the nucleus. The protein resides in the synapse. It is found in the postsynaptic density. The protein localises to the secreted. It carries out the reaction hexadecanoate(out) = hexadecanoate(in). The catalysed reaction is (9Z,12Z)-octadecadienoate(out) = (9Z,12Z)-octadecadienoate(in). It catalyses the reaction (9Z)-octadecenoate(out) = (9Z)-octadecenoate(in). In terms of biological role, intracellular carrier for long-chain fatty acids and related active lipids, such as endocannabinoids, that regulate the metabolism and actions of the ligands they bind. In addition to the cytosolic transport, selectively delivers specific fatty acids from the cytosol to the nucleus, wherein they activate nuclear receptors. Delivers retinoic acid to the nuclear receptor peroxisome proliferator-activated receptor delta; which promotes proliferation and survival. May also serve as a synaptic carrier of endocannabinoid at central synapses and thus controls retrograde endocannabinoid signaling. Modulates inflammation by regulating PTGES induction via NF-kappa-B activation, and prostaglandin E2 (PGE2) biosynthesis during inflammation. In Rattus norvegicus (Rat), this protein is Fatty acid-binding protein 5.